The sequence spans 348 residues: D-alanine--D-alanine ligase (348 aa).

Residues 136–344 enclose the ATP-grasp domain; the sequence is KSVFKSYNLP…LEKLVASLIE (209 aa). 171 to 226 is an ATP binding site; the sequence is NKIINYPCFIKPANLGSSVGITKAYSKEEFITGIEFAAKYDERIIVEKSIEGRELE. Residues Asp-297, Glu-311, and Asn-313 each contribute to the Mg(2+) site.

It belongs to the D-alanine--D-alanine ligase family. Mg(2+) is required as a cofactor. It depends on Mn(2+) as a cofactor.

The protein resides in the cytoplasm. It catalyses the reaction 2 D-alanine + ATP = D-alanyl-D-alanine + ADP + phosphate + H(+). The protein operates within cell wall biogenesis; peptidoglycan biosynthesis. Cell wall formation. The sequence is that of D-alanine--D-alanine ligase from Prochlorococcus marinus (strain NATL1A).